Here is a 621-residue protein sequence, read N- to C-terminus: Chaperone protein HscA homolog (621 aa).

Belongs to the heat shock protein 70 family.

Chaperone involved in the maturation of iron-sulfur cluster-containing proteins. Has a low intrinsic ATPase activity which is markedly stimulated by HscB. The protein is Chaperone protein HscA homolog of Cupriavidus metallidurans (strain ATCC 43123 / DSM 2839 / NBRC 102507 / CH34) (Ralstonia metallidurans).